A 190-amino-acid polypeptide reads, in one-letter code: Ohanin (190 aa).

The first 20 residues, 1 to 20, serve as a signal peptide directing secretion; sequence MLLFTLCFFADQENGGKALA. Residues 21–127 form the B30.2/SPRY domain; it reads SPPGNWQKAD…RIWQKGLWWL (107 aa). Positions 128–190 are excised as a propeptide; sequence RRLETDSDKL…IGARVSLANL (63 aa).

In terms of tissue distribution, expressed by the venom gland.

The protein resides in the secreted. Its function is as follows. Neurotoxin that produces dose-dependent hypolocomotion and hyperalgesia in mice. May directly act on the central nervous system, as it is 6500-fold more potent when administered intracerebroventricularly than intraperitoneal. The chain is Ohanin from Ophiophagus hannah (King cobra).